A 154-amino-acid polypeptide reads, in one-letter code: D-aminoacyl-tRNA deacylase (154 aa).

A Gly-cisPro motif, important for rejection of L-amino acids motif is present at residues 142-143 (GP).

It belongs to the DTD family. As to quaternary structure, homodimer.

It localises to the cytoplasm. It carries out the reaction glycyl-tRNA(Ala) + H2O = tRNA(Ala) + glycine + H(+). It catalyses the reaction a D-aminoacyl-tRNA + H2O = a tRNA + a D-alpha-amino acid + H(+). In terms of biological role, an aminoacyl-tRNA editing enzyme that deacylates mischarged D-aminoacyl-tRNAs. Also deacylates mischarged glycyl-tRNA(Ala), protecting cells against glycine mischarging by AlaRS. Acts via tRNA-based rather than protein-based catalysis; rejects L-amino acids rather than detecting D-amino acids in the active site. By recycling D-aminoacyl-tRNA to D-amino acids and free tRNA molecules, this enzyme counteracts the toxicity associated with the formation of D-aminoacyl-tRNA entities in vivo and helps enforce protein L-homochirality. This is D-aminoacyl-tRNA deacylase (DTD1) from Yarrowia lipolytica (strain CLIB 122 / E 150) (Yeast).